The following is a 513-amino-acid chain: Xylose import ATP-binding protein XylG (513 aa).

ABC transporter domains follow at residues 5 to 242 (LEMK…VGRE) and 259 to 505 (LRIE…LRSE). 37-44 (GENGSGKS) contacts ATP.

This sequence belongs to the ABC transporter superfamily. Xylose importer (TC 3.A.1.2.4) family. In terms of assembly, the complex is composed of two ATP-binding proteins (XylG), two transmembrane proteins (XylH) and a solute-binding protein (XylF).

The protein resides in the cell inner membrane. The enzyme catalyses D-xylose(out) + ATP + H2O = D-xylose(in) + ADP + phosphate + H(+). In terms of biological role, part of the ABC transporter complex XylFGH involved in xylose import. Responsible for energy coupling to the transport system. This Escherichia coli O6:K15:H31 (strain 536 / UPEC) protein is Xylose import ATP-binding protein XylG.